The sequence spans 131 residues: Fluoride-specific ion channel FluC (131 aa).

4 helical membrane passes run 10 to 30 (AAVA…SGLV), 36 to 56 (FPMG…FLTW), 71 to 91 (LATV…YETV), and 99 to 119 (VLSI…VLGG). The Na(+) site is built by G78 and T81.

This sequence belongs to the fluoride channel Fluc/FEX (TC 1.A.43) family.

It localises to the cell membrane. The enzyme catalyses fluoride(in) = fluoride(out). With respect to regulation, na(+) is not transported, but it plays an essential structural role and its presence is essential for fluoride channel function. Fluoride-specific ion channel. Important for reducing fluoride concentration in the cell, thus reducing its toxicity. The polypeptide is Fluoride-specific ion channel FluC (Methanopyrus kandleri (strain AV19 / DSM 6324 / JCM 9639 / NBRC 100938)).